We begin with the raw amino-acid sequence, 432 residues long: Enolase (432 aa).

Q166 lines the (2R)-2-phosphoglycerate pocket. Catalysis depends on E208, which acts as the Proton donor. Mg(2+)-binding residues include D245, E291, and D318. K343, R372, S373, and K394 together coordinate (2R)-2-phosphoglycerate. K343 serves as the catalytic Proton acceptor.

Belongs to the enolase family. The cofactor is Mg(2+).

It is found in the cytoplasm. Its subcellular location is the secreted. The protein localises to the cell surface. It catalyses the reaction (2R)-2-phosphoglycerate = phosphoenolpyruvate + H2O. Its pathway is carbohydrate degradation; glycolysis; pyruvate from D-glyceraldehyde 3-phosphate: step 4/5. Functionally, catalyzes the reversible conversion of 2-phosphoglycerate (2-PG) into phosphoenolpyruvate (PEP). It is essential for the degradation of carbohydrates via glycolysis. This is Enolase from Leptospira borgpetersenii serovar Hardjo-bovis (strain L550).